The sequence spans 95 residues: Signal recognition particle 19 kDa protein (95 aa).

It belongs to the SRP19 family. As to quaternary structure, part of the signal recognition particle protein translocation system, which is composed of SRP and FtsY. Archaeal SRP consists of a 7S RNA molecule of 300 nucleotides and two protein subunits: SRP54 and SRP19.

It is found in the cytoplasm. Its function is as follows. Involved in targeting and insertion of nascent membrane proteins into the cytoplasmic membrane. Binds directly to 7S RNA and mediates binding of the 54 kDa subunit of the SRP. The chain is Signal recognition particle 19 kDa protein from Desulfurococcus amylolyticus (strain DSM 18924 / JCM 16383 / VKM B-2413 / 1221n) (Desulfurococcus kamchatkensis).